We begin with the raw amino-acid sequence, 455 residues long: MNELTGADFKSATADDNKKLFIETYGCQMNVADSEVIASVMQMAGYSVAETLEEADAVFMNTCSIRDNAEQKILNRLEFFHSLKKKKKALIVGVLGCMAERVKDDLITNHHVDLVVGPDAYLTLPELIAAVEAGEKAINVDLSTTETYRDVIPSRICGNHISGFVSIMRGCNNFCTYCIVPYTRGRERSRDVESILNEVADLVAKGYKEVTLLGQNVNSYRFEKPTGEVVTFPMLLRMVAEAAPGVRIRFTTSHPKDMSDETLEVIAQVPNVCKHIHLPVQSGSSRILKLMNRKYTREWYLDRVAAIKRIIPDCGLTTDIFSGFHSETEEDHQLSLSLMEECGYDAAFMFKYSERPGTYASKHLEDNVPEDVKVRRLNEIIALQNRLSAESNQRCIGKTYEVLVEGVSKRSRDQLFGRTEQNRVVVFDRGTHRIGDFVNVRVTEASSATLKGEEV.

The region spanning 18–133 (KKLFIETYGC…LPELIAAVEA (116 aa)) is the MTTase N-terminal domain. Residues cysteine 27, cysteine 63, cysteine 97, cysteine 171, cysteine 175, and cysteine 178 each coordinate [4Fe-4S] cluster. A Radical SAM core domain is found at 157 to 390 (CGNHISGFVS…IALQNRLSAE (234 aa)). The 63-residue stretch at 393–455 (QRCIGKTYEV…SSATLKGEEV (63 aa)) folds into the TRAM domain.

This sequence belongs to the methylthiotransferase family. MiaB subfamily. Monomer. The cofactor is [4Fe-4S] cluster.

It is found in the cytoplasm. It catalyses the reaction N(6)-dimethylallyladenosine(37) in tRNA + (sulfur carrier)-SH + AH2 + 2 S-adenosyl-L-methionine = 2-methylsulfanyl-N(6)-dimethylallyladenosine(37) in tRNA + (sulfur carrier)-H + 5'-deoxyadenosine + L-methionine + A + S-adenosyl-L-homocysteine + 2 H(+). Catalyzes the methylthiolation of N6-(dimethylallyl)adenosine (i(6)A), leading to the formation of 2-methylthio-N6-(dimethylallyl)adenosine (ms(2)i(6)A) at position 37 in tRNAs that read codons beginning with uridine. This Bacteroides thetaiotaomicron (strain ATCC 29148 / DSM 2079 / JCM 5827 / CCUG 10774 / NCTC 10582 / VPI-5482 / E50) protein is tRNA-2-methylthio-N(6)-dimethylallyladenosine synthase.